The sequence spans 76 residues: Omega-conotoxin-like TxMKLT1-0211 (76 aa).

Residues 1–22 (MKLTCMMIVAVLFLTAWTFVTA) form the signal peptide. A propeptide spanning residues 23-52 (VPHSSNALENLYLKAHHEMNNPEDSELNKR) is cleaved from the precursor. 3 disulfides stabilise this stretch: Cys-53–Cys-67, Cys-60–Cys-71, and Cys-66–Cys-75.

It belongs to the conotoxin O1 superfamily. Expressed by the venom duct.

Its subcellular location is the secreted. In terms of biological role, omega-conotoxins act at presynaptic membranes, they bind and block voltage-gated calcium channels (Cav). This chain is Omega-conotoxin-like TxMKLT1-0211, found in Conus textile (Cloth-of-gold cone).